The primary structure comprises 288 residues: Ribosomal RNA small subunit methyltransferase A (288 aa).

S-adenosyl-L-methionine-binding residues include Asn-28, Leu-30, Gly-55, Glu-76, Asp-101, and Asn-130.

Belongs to the class I-like SAM-binding methyltransferase superfamily. rRNA adenine N(6)-methyltransferase family. RsmA subfamily.

It is found in the cytoplasm. It carries out the reaction adenosine(1518)/adenosine(1519) in 16S rRNA + 4 S-adenosyl-L-methionine = N(6)-dimethyladenosine(1518)/N(6)-dimethyladenosine(1519) in 16S rRNA + 4 S-adenosyl-L-homocysteine + 4 H(+). In terms of biological role, specifically dimethylates two adjacent adenosines (A1518 and A1519) in the loop of a conserved hairpin near the 3'-end of 16S rRNA in the 30S particle. May play a critical role in biogenesis of 30S subunits. This is Ribosomal RNA small subunit methyltransferase A from Moorella thermoacetica (strain ATCC 39073 / JCM 9320).